A 227-amino-acid polypeptide reads, in one-letter code: Phosphoribosylaminoimidazole-succinocarboxamide synthase (227 aa).

It belongs to the SAICAR synthetase family.

The catalysed reaction is 5-amino-1-(5-phospho-D-ribosyl)imidazole-4-carboxylate + L-aspartate + ATP = (2S)-2-[5-amino-1-(5-phospho-beta-D-ribosyl)imidazole-4-carboxamido]succinate + ADP + phosphate + 2 H(+). It participates in purine metabolism; IMP biosynthesis via de novo pathway; 5-amino-1-(5-phospho-D-ribosyl)imidazole-4-carboxamide from 5-amino-1-(5-phospho-D-ribosyl)imidazole-4-carboxylate: step 1/2. This chain is Phosphoribosylaminoimidazole-succinocarboxamide synthase, found in Clostridium tetani (strain Massachusetts / E88).